The sequence spans 249 residues: DNA polymerase sliding clamp (249 aa).

Belongs to the PCNA family. As to quaternary structure, homotrimer. The subunits circularize to form a toroid; DNA passes through its center. Replication factor C (RFC) is required to load the toroid on the DNA.

Its function is as follows. Sliding clamp subunit that acts as a moving platform for DNA processing. Responsible for tethering the catalytic subunit of DNA polymerase and other proteins to DNA during high-speed replication. This Thermococcus fumicolans protein is DNA polymerase sliding clamp.